A 397-amino-acid chain; its full sequence is 8-amino-7-oxononanoate synthase (397 aa).

Arginine 21 contacts substrate. 110–111 is a binding site for pyridoxal 5'-phosphate; sequence GY. Histidine 135 lines the substrate pocket. Residues serine 181, histidine 209, and threonine 238 each contribute to the pyridoxal 5'-phosphate site. Lysine 241 carries the post-translational modification N6-(pyridoxal phosphate)lysine. Threonine 355 lines the substrate pocket.

It belongs to the class-II pyridoxal-phosphate-dependent aminotransferase family. BioF subfamily. Homodimer. Pyridoxal 5'-phosphate is required as a cofactor.

The catalysed reaction is 6-carboxyhexanoyl-[ACP] + L-alanine + H(+) = (8S)-8-amino-7-oxononanoate + holo-[ACP] + CO2. It participates in cofactor biosynthesis; biotin biosynthesis. Catalyzes the decarboxylative condensation of pimeloyl-[acyl-carrier protein] and L-alanine to produce 8-amino-7-oxononanoate (AON), [acyl-carrier protein], and carbon dioxide. This is 8-amino-7-oxononanoate synthase from Saccharophagus degradans (strain 2-40 / ATCC 43961 / DSM 17024).